A 245-amino-acid chain; its full sequence is DNA polymerase sliding clamp 2 (245 aa).

The protein belongs to the PCNA family. In terms of assembly, forms homodimers with PCNA1, which then recruit PCNA3; does not form homotrimers. The heterodimers interact with RfcS homotetramers. Heterotrimer which circularizes head-to-tail (head is at N-terminus, tail is at C-terminus) to form a toroid; DNA passes through its center. Replication factor C (RFC) is required to load the toroid on the DNA. This subunit interacts with DNA polymerase I (dpo1). The heterotrimer also interacts with flap endonuclease 1, DNA ligase and XPF via the other subunits.

Functionally, one of the sliding clamp subunits that acts as a moving platform for DNA processing. Responsible for tethering the catalytic subunit of DNA polymerase to DNA during high-speed replication. Heterotrimer stimulates the Holliday junction resolvase Hjc. DNA polymerase I, DNA ligase and the flap endonuclease may be constitutively associated with the PCNA heterotrimer forming a scanning complex able to couple DNA synthesis and Okazaki fragment maturation. The protein is DNA polymerase sliding clamp 2 of Saccharolobus solfataricus (strain ATCC 35092 / DSM 1617 / JCM 11322 / P2) (Sulfolobus solfataricus).